Reading from the N-terminus, the 466-residue chain is 3-isopropylmalate dehydratase large subunit 1 (466 aa).

[4Fe-4S] cluster contacts are provided by Cys-347, Cys-407, and Cys-410.

This sequence belongs to the aconitase/IPM isomerase family. LeuC type 1 subfamily. Heterodimer of LeuC and LeuD. The cofactor is [4Fe-4S] cluster.

It carries out the reaction (2R,3S)-3-isopropylmalate = (2S)-2-isopropylmalate. The protein operates within amino-acid biosynthesis; L-leucine biosynthesis; L-leucine from 3-methyl-2-oxobutanoate: step 2/4. In terms of biological role, catalyzes the isomerization between 2-isopropylmalate and 3-isopropylmalate, via the formation of 2-isopropylmaleate. This chain is 3-isopropylmalate dehydratase large subunit 1, found in Salmonella choleraesuis (strain SC-B67).